Consider the following 180-residue polypeptide: Large ribosomal subunit protein uL5 (180 aa).

This sequence belongs to the universal ribosomal protein uL5 family. Part of the 50S ribosomal subunit; part of the 5S rRNA/L5/L18/L25 subcomplex. Contacts the 5S rRNA and the P site tRNA. Forms a bridge to the 30S subunit in the 70S ribosome.

Functionally, this is one of the proteins that bind and probably mediate the attachment of the 5S RNA into the large ribosomal subunit, where it forms part of the central protuberance. In the 70S ribosome it contacts protein S13 of the 30S subunit (bridge B1b), connecting the 2 subunits; this bridge is implicated in subunit movement. Contacts the P site tRNA; the 5S rRNA and some of its associated proteins might help stabilize positioning of ribosome-bound tRNAs. This Chlamydia pneumoniae (Chlamydophila pneumoniae) protein is Large ribosomal subunit protein uL5.